A 98-amino-acid chain; its full sequence is Small ribosomal subunit protein bS18 (98 aa).

Belongs to the bacterial ribosomal protein bS18 family. As to quaternary structure, part of the 30S ribosomal subunit. Forms a tight heterodimer with protein bS6.

Binds as a heterodimer with protein bS6 to the central domain of the 16S rRNA, where it helps stabilize the platform of the 30S subunit. This is Small ribosomal subunit protein bS18 from Flavobacterium psychrophilum (strain ATCC 49511 / DSM 21280 / CIP 103535 / JIP02/86).